The following is a 400-amino-acid chain: Phosphoglycerate kinase (400 aa).

Residues 21–23 (DFN), arginine 36, 59–62 (HLGR), arginine 119, and arginine 160 contribute to the substrate site. ATP is bound by residues lysine 211, glutamate 329, and 356–359 (GGDS).

This sequence belongs to the phosphoglycerate kinase family. In terms of assembly, monomer.

Its subcellular location is the cytoplasm. It catalyses the reaction (2R)-3-phosphoglycerate + ATP = (2R)-3-phospho-glyceroyl phosphate + ADP. It participates in carbohydrate degradation; glycolysis; pyruvate from D-glyceraldehyde 3-phosphate: step 2/5. This is Phosphoglycerate kinase from Levilactobacillus brevis (strain ATCC 367 / BCRC 12310 / CIP 105137 / JCM 1170 / LMG 11437 / NCIMB 947 / NCTC 947) (Lactobacillus brevis).